Here is a 214-residue protein sequence, read N- to C-terminus: DELTA-actitoxin-Aeq1b (214 aa).

The N-terminal stretch at 1–19 (MSRLIIVFIVVTMICAATA) is a signal peptide. A propeptide spanning residues 20 to 35 (LSSKKSINEDEKDEKR) is cleaved from the precursor. A plays an important role in the hemolytic activity region spans residues 38–47 (AVAGAVIEGA). Residues 46–65 (GATLTFNVLQTVLKALGDIS) are N-terminal region. Residues serine 89, valine 122, serine 140, proline 142, tyrosine 168, tyrosine 172, and tyrosine 173 each coordinate phosphocholine. The tract at residues 140–155 (SIPFDYNLYSNWWNVK) is trp-rich region, which is important for the binding to lipid membrane. The Cell attachment site, crucial for protein stability motif lies at 179–181 (RGD).

Belongs to the actinoporin family. Sea anemone subfamily. As to quaternary structure, octamer or nonamer in membranes. Monomer in the soluble state.

Its subcellular location is the secreted. It is found in the nematocyst. It localises to the target cell membrane. Its function is as follows. Pore-forming protein that forms cations-selective hydrophilic pores of around 1 nm and causes cytolysis. Pore formation is a multi-step process that involves specific recognition of membrane sphingomyelin (but neither cholesterol nor phosphatidylcholine) using aromatic rich region and adjacent phosphocholine (POC) binding site, firm binding to the membrane (mainly driven by hydrophobic interactions) accompanied by the transfer of the N-terminal region to the lipid-water interface and finally pore formation after oligomerization of monomers. This chain is DELTA-actitoxin-Aeq1b, found in Actinia equina (Beadlet anemone).